The chain runs to 106 residues: MRNSIYKLIMFAVLCMVLTSSLSYAQVTFSRDWNAGKRSLAEAAQSTGDCAAIWRSVTNLCAAVTKNIQHLTMCEARALMKNLQSEDASMENNGGGGLPLFSNGHL.

The signal sequence occupies residues 1-25 (MRNSIYKLIMFAVLCMVLTSSLSYA). The residue at position 26 (Gln-26) is a Pyrrolidone carboxylic acid. An Alanine amide modification is found at Ala-35. The propeptide occupies 39-106 (SLAEAAQSTG…GLPLFSNGHL (68 aa)).

It belongs to the AKH/HRTH/RPCH family. Only expressed in the head and thorax body segments of adults. Is more expressed in adult males than in females.

It is found in the secreted. Neuropeptide with neuromodulator or neurotransmitter role that activates the adipokinetic hormone/corazonin-related peptide receptor (ACPR). May function in regulation of post-ecdysis activities. Does not activate the A.gambiae adipokinetic hormone (AKH) and corazonin (CRZ) receptors. This Aedes aegypti (Yellowfever mosquito) protein is Adipokinetic hormone/corazonin-related peptide.